The chain runs to 172 residues: Translationally-controlled tumor protein (172 aa).

One can recognise a TCTP domain in the interval M1 to C172. At S46 the chain carries Phosphoserine; by PLK1. S53 is subject to Phosphoserine. Position 64 is a phosphoserine; by PLK1 (S64). A required for reduction of TSC22D1 protein stability region spans residues V70–C172.

It belongs to the TCTP family. In terms of assembly, homodimer. Interacts with STEAP3. Interacts with TSC22D1; interaction results in the destabilization of TSC22D1 protein. Found in several healthy and tumoral cells including erythrocytes, hepatocytes, macrophages, platelets, keratinocytes, erythroleukemia cells, gliomas, melanomas, hepatoblastomas, and lymphomas. It cannot be detected in kidney and renal cell carcinoma (RCC). Expressed in placenta and prostate.

The protein resides in the cytoplasm. In terms of biological role, involved in calcium binding and microtubule stabilization. Acts as a negative regulator of TSC22D1-mediated apoptosis, via interaction with and destabilization of TSC22D1 protein. The polypeptide is Translationally-controlled tumor protein (TPT1) (Homo sapiens (Human)).